The primary structure comprises 518 residues: 2-isopropylmalate synthase (518 aa).

In terms of domain architecture, Pyruvate carboxyltransferase spans 5–268 (IIIFDTTLRD…DTRINTQEIH (264 aa)). Mn(2+) contacts are provided by aspartate 14, histidine 202, histidine 204, and asparagine 238. The tract at residues 393-518 (TLDVITSQCI…DLKLHKIAGV (126 aa)) is regulatory domain.

It belongs to the alpha-IPM synthase/homocitrate synthase family. LeuA type 1 subfamily. As to quaternary structure, homodimer. The cofactor is Mn(2+).

It localises to the cytoplasm. It catalyses the reaction 3-methyl-2-oxobutanoate + acetyl-CoA + H2O = (2S)-2-isopropylmalate + CoA + H(+). The protein operates within amino-acid biosynthesis; L-leucine biosynthesis; L-leucine from 3-methyl-2-oxobutanoate: step 1/4. In terms of biological role, catalyzes the condensation of the acetyl group of acetyl-CoA with 3-methyl-2-oxobutanoate (2-ketoisovalerate) to form 3-carboxy-3-hydroxy-4-methylpentanoate (2-isopropylmalate). In Pasteurella multocida (strain Pm70), this protein is 2-isopropylmalate synthase.